We begin with the raw amino-acid sequence, 415 residues long: Phosphoribosylamine--glycine ligase (415 aa).

The ATP-grasp domain maps to 108-311; that stretch reads KKIMKKYNIP…LMQHIIDLDE (204 aa). ATP is bound at residue 134-191; that stretch reads IENCELPVVVKKDGLAAGKGVIIADTIEAARSAIEIMYGDEEEGTVVFETFLEGEEFS. Residues Glu281 and Asn283 each coordinate Mg(2+).

It belongs to the GARS family. Mg(2+) serves as cofactor. It depends on Mn(2+) as a cofactor.

The catalysed reaction is 5-phospho-beta-D-ribosylamine + glycine + ATP = N(1)-(5-phospho-beta-D-ribosyl)glycinamide + ADP + phosphate + H(+). The protein operates within purine metabolism; IMP biosynthesis via de novo pathway; N(1)-(5-phospho-D-ribosyl)glycinamide from 5-phospho-alpha-D-ribose 1-diphosphate: step 2/2. This Staphylococcus aureus (strain Mu50 / ATCC 700699) protein is Phosphoribosylamine--glycine ligase.